The sequence spans 283 residues: Peroxisome biogenesis protein 22 (283 aa).

An N-acetylalanine modification is found at A2. Residues 45–62 (IGAIAGLAIAVIFTWRAI) traverse the membrane as a helical segment. The tract at residues 66–107 (GEQRQRRQPKRRIHNAETSSAAAAASQSNLASSVAPEVSSPR) is disordered. Residues 81–100 (AETSSAAAAASQSNLASSVA) show a composition bias toward low complexity.

It belongs to the peroxin-22 family. Interacts with PEX4.

The protein localises to the peroxisome membrane. Functionally, may be tethered PEX4 to the peroxisome membrane and may be involved in a late step of the matrix protein import. Does not play a role in the biogenesis of the peroxisomal membrane. This Arabidopsis thaliana (Mouse-ear cress) protein is Peroxisome biogenesis protein 22 (PEX22).